The chain runs to 344 residues: Arylacetonitrilase (344 aa).

Residues 5-290 (LRVAVTQAEP…EGIVYADLDL (286 aa)) enclose the CN hydrolase domain. The active-site Proton acceptor is the Glu45. Lys126 is an active-site residue. The active-site Nucleophile is Cys167. The tract at residues 324-344 (VIPRDEEEPSRKANVVVPKQE) is disordered.

It belongs to the carbon-nitrogen hydrolase superfamily. Nitrilase family.

The enzyme catalyses a nitrile + 2 H2O = a carboxylate + NH4(+). It carries out the reaction 4-chlorophenylacetonitrile + 2 H2O = 4-chlorophenylacetate + NH4(+). Nitrilase that hydrolyzes preferentially phenylacetonitrile and (R,S)-mandelonitrile. Also acts on dinitriles like phenylenediacetonitriles (PDAs) 1,2-PDA, 1,3-PDA, and 1,4-PDA, and cyanophenyl acetonitriles (CPAs) 2-CPA and 4-CPA. In Macrophomina phaseolina (strain MS6) (Charcoal rot fungus), this protein is Arylacetonitrilase.